The sequence spans 111 residues: Small ribosomal subunit protein bS16 (111 aa).

The protein belongs to the bacterial ribosomal protein bS16 family.

This Rickettsia prowazekii (strain Madrid E) protein is Small ribosomal subunit protein bS16.